The sequence spans 346 residues: Methylthioribose-1-phosphate isomerase (346 aa).

Substrate contacts are provided by residues 50–52 (RGA), Arg93, and Gln196. The Proton donor role is filled by Asp237. Position 247–248 (247–248 (NK)) interacts with substrate.

It belongs to the eIF-2B alpha/beta/delta subunits family. MtnA subfamily.

The catalysed reaction is 5-(methylsulfanyl)-alpha-D-ribose 1-phosphate = 5-(methylsulfanyl)-D-ribulose 1-phosphate. Its pathway is amino-acid biosynthesis; L-methionine biosynthesis via salvage pathway; L-methionine from S-methyl-5-thio-alpha-D-ribose 1-phosphate: step 1/6. Functionally, catalyzes the interconversion of methylthioribose-1-phosphate (MTR-1-P) into methylthioribulose-1-phosphate (MTRu-1-P). This chain is Methylthioribose-1-phosphate isomerase, found in Alkalilimnicola ehrlichii (strain ATCC BAA-1101 / DSM 17681 / MLHE-1).